We begin with the raw amino-acid sequence, 304 residues long: Tyrosine recombinase XerD (304 aa).

Positions 6–91 (EPWRKTLETF…AIRSFHKFLL (86 aa)) constitute a Core-binding (CB) domain. Positions 112–298 (YLPSVLTIEE…DRSFIKEVHK (187 aa)) constitute a Tyr recombinase domain. Residues Arg-155, Lys-179, His-250, Arg-253, and His-276 contribute to the active site. The active-site O-(3'-phospho-DNA)-tyrosine intermediate is the Tyr-285.

It belongs to the 'phage' integrase family. XerD subfamily. In terms of assembly, forms a cyclic heterotetrameric complex composed of two molecules of XerC and two molecules of XerD.

Its subcellular location is the cytoplasm. Functionally, site-specific tyrosine recombinase, which acts by catalyzing the cutting and rejoining of the recombining DNA molecules. The XerC-XerD complex is essential to convert dimers of the bacterial chromosome into monomers to permit their segregation at cell division. It also contributes to the segregational stability of plasmids. The chain is Tyrosine recombinase XerD from Chlorobaculum tepidum (strain ATCC 49652 / DSM 12025 / NBRC 103806 / TLS) (Chlorobium tepidum).